The sequence spans 150 residues: Large ribosomal subunit protein bL9 (150 aa).

The protein belongs to the bacterial ribosomal protein bL9 family.

Binds to the 23S rRNA. This chain is Large ribosomal subunit protein bL9, found in Lactococcus lactis subsp. cremoris (strain MG1363).